Here is a 465-residue protein sequence, read N- to C-terminus: Hepatocyte nuclear factor 6 (465 aa).

Disordered regions lie at residues 17–55 (SHEP…SMGM), 120–141 (DKFP…HQRL), 264–290 (LLGT…GQME), and 442–465 (DKWQ…CTKA). Basic residues predominate over residues 123-140 (PHHHHHHHHHHHPHHHQR). The segment covering 273–288 (PSVTGAQVSNGSNSGQ) has biased composition (polar residues). A DNA-binding region (CUT) is located at residues 283-369 (GSNSGQMEEI…QRMSALRLAA (87 aa)). Positions 385-444 (PKKPRLVFTDVQRRTLHAIFKENKRPSKELQITISQQLGLELSTVSNFFMNARRRSLDKW) form a DNA-binding region, homeobox. Residues 448-465 (GSSNSGNSSSSSSTCTKA) show a composition bias toward low complexity.

Belongs to the CUT homeobox family. As to quaternary structure, binds DNA as a monomer. Highly expressed in liver; lower expression in testis and skin.

The protein resides in the nucleus. Its function is as follows. Transcriptional activator. Binds the consensus sequence 5'-DHWATTGAYTWWD-3' on a variety of gene promoters such as those of HNF3B and TTR. Important for liver genes transcription. The sequence is that of Hepatocyte nuclear factor 6 (ONECUT1) from Homo sapiens (Human).